The following is a 492-amino-acid chain: Cytochrome P450 monooxygenase MYCFIDRAFT_204672 (492 aa).

Residue asparagine 116 is glycosylated (N-linked (GlcNAc...) asparagine). A helical transmembrane segment spans residues 269 to 293; it reads FLISMIFISAANGCVVSGAMLYSIA. The N-linked (GlcNAc...) asparagine glycan is linked to asparagine 335. Cysteine 430 is a heme binding site.

Belongs to the cytochrome P450 family. Heme is required as a cofactor.

Its subcellular location is the membrane. Its pathway is secondary metabolite biosynthesis. Cytochrome P450 monooxygenase; part of the gene cluster that mediates the biosynthesis of an emodin derivative that may be involved in black Sigatoka disease of banana. The pathway begins with the synthesis of atrochrysone thioester by the polyketide synthase PKS8-1. The atrochrysone carboxyl ACP thioesterase MYCFIDRAFT_190111 then breaks the thioester bond and releases the atrochrysone carboxylic acid from PKS8-1. The decarboxylase MYCFIDRAFT_34057 then catalyzes the concerted decarboxylation-elimination required to convert atochrysone carboxylic acid into emodin anthrone, which is further oxidized to emodin by the anthrone oxygenase MYCFIDRAFT_34418. The functions of the other tailoring enzymes as well as the final product of the cluster have still to be identified. The polypeptide is Cytochrome P450 monooxygenase MYCFIDRAFT_204672 (Pseudocercospora fijiensis (strain CIRAD86) (Black leaf streak disease fungus)).